The primary structure comprises 136 residues: Ig heavy chain V-A2 region P-MU-3 (136 aa).

A signal peptide spans Met-1–Cys-19. The residue at position 20 (Gln-20) is a Pyrrolidone carboxylic acid. The Ig-like domain maps to Gln-20–Gly-127.

This is Ig heavy chain V-A2 region P-MU-3 from Oryctolagus cuniculus (Rabbit).